The following is a 356-amino-acid chain: Dual-specificity RNA methyltransferase RlmN (356 aa).

E89 functions as the Proton acceptor in the catalytic mechanism. The region spanning 108–341 is the Radical SAM core domain; that stretch reads KHARYTICVS…CTIRESKGLD (234 aa). C115 and C346 are joined by a disulfide. 3 residues coordinate [4Fe-4S] cluster: C122, C126, and C129. Residues 172-173, S204, 227-229, and N303 each bind S-adenosyl-L-methionine; these read GE and SLH. C346 functions as the S-methylcysteine intermediate in the catalytic mechanism.

Belongs to the radical SAM superfamily. RlmN family. It depends on [4Fe-4S] cluster as a cofactor.

It is found in the cytoplasm. It catalyses the reaction adenosine(2503) in 23S rRNA + 2 reduced [2Fe-2S]-[ferredoxin] + 2 S-adenosyl-L-methionine = 2-methyladenosine(2503) in 23S rRNA + 5'-deoxyadenosine + L-methionine + 2 oxidized [2Fe-2S]-[ferredoxin] + S-adenosyl-L-homocysteine. The catalysed reaction is adenosine(37) in tRNA + 2 reduced [2Fe-2S]-[ferredoxin] + 2 S-adenosyl-L-methionine = 2-methyladenosine(37) in tRNA + 5'-deoxyadenosine + L-methionine + 2 oxidized [2Fe-2S]-[ferredoxin] + S-adenosyl-L-homocysteine. In terms of biological role, specifically methylates position 2 of adenine 2503 in 23S rRNA and position 2 of adenine 37 in tRNAs. m2A2503 modification seems to play a crucial role in the proofreading step occurring at the peptidyl transferase center and thus would serve to optimize ribosomal fidelity. The polypeptide is Dual-specificity RNA methyltransferase RlmN (Campylobacter lari (strain RM2100 / D67 / ATCC BAA-1060)).